The primary structure comprises 490 residues: Betaine aldehyde dehydrogenase (490 aa).

T26, I27, and D93 together coordinate K(+). 150–152 is a binding site for NAD(+); that stretch reads GAW. K162 functions as the Charge relay system in the catalytic mechanism. An NAD(+)-binding site is contributed by 176–179; the sequence is KPSE. V180 is a K(+) binding site. 230–233 provides a ligand contact to NAD(+); the sequence is GVAS. L246 serves as a coordination point for K(+). The active-site Proton acceptor is E252. The NAD(+) site is built by G254, C286, and E387. Residue C286 is the Nucleophile of the active site. At C286 the chain carries Cysteine sulfenic acid (-SOH). K(+)-binding residues include K457 and G460. E464 acts as the Charge relay system in catalysis.

This sequence belongs to the aldehyde dehydrogenase family. As to quaternary structure, dimer of dimers. The cofactor is K(+).

It carries out the reaction betaine aldehyde + NAD(+) + H2O = glycine betaine + NADH + 2 H(+). Its pathway is amine and polyamine biosynthesis; betaine biosynthesis via choline pathway; betaine from betaine aldehyde: step 1/1. Functionally, involved in the biosynthesis of the osmoprotectant glycine betaine. Catalyzes the irreversible oxidation of betaine aldehyde to the corresponding acid. This Klebsiella pneumoniae (strain 342) protein is Betaine aldehyde dehydrogenase.